The primary structure comprises 127 residues: NADPH-dependent 7-cyano-7-deazaguanine reductase (127 aa).

Residue Cys40 is the Thioimide intermediate of the active site. Residue Asp47 is the Proton donor of the active site. Substrate-binding positions include 62-64 and 81-82; these read VEL and HE.

Belongs to the GTP cyclohydrolase I family. QueF type 1 subfamily.

It is found in the cytoplasm. The enzyme catalyses 7-aminomethyl-7-carbaguanine + 2 NADP(+) = 7-cyano-7-deazaguanine + 2 NADPH + 3 H(+). It functions in the pathway tRNA modification; tRNA-queuosine biosynthesis. Functionally, catalyzes the NADPH-dependent reduction of 7-cyano-7-deazaguanine (preQ0) to 7-aminomethyl-7-deazaguanine (preQ1). This Campylobacter jejuni subsp. jejuni serotype O:2 (strain ATCC 700819 / NCTC 11168) protein is NADPH-dependent 7-cyano-7-deazaguanine reductase.